The following is a 405-amino-acid chain: Dynactin subunit 2 (405 aa).

The interval 1-24 (MADPKYADLPGIARNEPDVYETSD) is disordered. A coiled-coil region spans residues 101–134 (PQQKYQRLLHEIQELTQEVEKAQSTVKESAAEEK). Residues 186-207 (AKTRKNPEGKSPAKGPGPDNEN) form a disordered region. Residues 383 to 403 (KENLATVEDNFTSIDARIKKL) are a coiled coil.

The protein belongs to the dynactin subunit 2 family. In terms of assembly, subunit of dynactin, a multiprotein complex part of a tripartite complex with dynein and a adapter, such as BICDL1, BICD2 or HOOK3. The dynactin complex is built around ACTR1A/ACTB filament and consists of an actin-related filament composed of a shoulder domain, a pointed end and a barbed end. Its length is defined by its flexible shoulder domain. The soulder is composed of 2 DCTN1 subunits, 4 DCTN2 and 2 DCTN3.

Its subcellular location is the cytoplasm. The protein resides in the cytoskeleton. It is found in the microtubule organizing center. The protein localises to the centrosome. It localises to the membrane. In terms of biological role, part of the dynactin complex that activates the molecular motor dynein for ultra-processive transport along microtubules. In the dynactin soulder domain, binds the ACTR1A filament and acts as a molecular ruler to determine the length. Modulates cytoplasmic dynein binding to an organelle, and plays a role in prometaphase chromosome alignment and spindle organization during mitosis. Involved in anchoring microtubules to centrosomes. This Xenopus tropicalis (Western clawed frog) protein is Dynactin subunit 2 (dctn2).